A 31-amino-acid chain; its full sequence is Cytochrome b6-f complex subunit 6 (31 aa).

Residues 4-24 form a helical membrane-spanning segment; it reads LTSYFGFLLAALTITSVLFIG.

This sequence belongs to the PetL family. As to quaternary structure, the 4 large subunits of the cytochrome b6-f complex are cytochrome b6, subunit IV (17 kDa polypeptide, PetD), cytochrome f and the Rieske protein, while the 4 small subunits are PetG, PetL, PetM and PetN. The complex functions as a dimer.

It localises to the plastid. The protein localises to the chloroplast thylakoid membrane. Component of the cytochrome b6-f complex, which mediates electron transfer between photosystem II (PSII) and photosystem I (PSI), cyclic electron flow around PSI, and state transitions. PetL is important for photoautotrophic growth as well as for electron transfer efficiency and stability of the cytochrome b6-f complex. This Silene conica (Striped corn catchfly) protein is Cytochrome b6-f complex subunit 6.